Consider the following 763-residue polypeptide: Phosphoglycerol transferase I (763 aa).

The next 4 membrane-spanning stretches (helical) occupy residues 1-21 (MSEL…AWKA), 26-46 (WWFA…ITLY), 77-97 (ILPG…LGWV), and 108-128 (VGYS…SPAF).

This sequence belongs to the OpgB family.

The protein resides in the cell inner membrane. It carries out the reaction a phosphatidylglycerol + a membrane-derived-oligosaccharide D-glucose = a 1,2-diacyl-sn-glycerol + a membrane-derived-oligosaccharide 6-(glycerophospho)-D-glucose.. It functions in the pathway glycan metabolism; osmoregulated periplasmic glucan (OPG) biosynthesis. Functionally, transfers a phosphoglycerol residue from phosphatidylglycerol to the membrane-bound nascent glucan backbones. The chain is Phosphoglycerol transferase I from Salmonella choleraesuis (strain SC-B67).